The primary structure comprises 509 residues: Transmembrane protein 102 (509 aa).

Residues 1 to 312 (MASTVWGGAP…VLLATPEPPR (312 aa)) lie on the Extracellular side of the membrane. The tract at residues 167 to 236 (PPVPEESDMT…NPETPEPLET (70 aa)) is disordered. Residues 174–204 (DMTHQTHSKESPTDRENSVDPSHDYVPEPEP) are compositionally biased toward basic and acidic residues. The span at 207–224 (SLQKSSSDLSESQSSYKD) shows a compositional bias: low complexity. A helical transmembrane segment spans residues 313-329 (HLLLFDLIPVVTVTGWP). Residues 330 to 509 (DTARSHSWAG…GLAGVGGGTH (180 aa)) are Cytoplasmic-facing.

In terms of assembly, interacts with CSF2RB; this interaction occurs preferentially in the absence of CSF2.

It is found in the cell membrane. Its function is as follows. Selectively involved in CSF2 deprivation-induced apoptosis via a mitochondria-dependent pathway. The sequence is that of Transmembrane protein 102 (Tmem102) from Mus musculus (Mouse).